The primary structure comprises 353 residues: S-adenosylmethionine:tRNA ribosyltransferase-isomerase (353 aa).

Belongs to the QueA family. As to quaternary structure, monomer.

The protein resides in the cytoplasm. It carries out the reaction 7-aminomethyl-7-carbaguanosine(34) in tRNA + S-adenosyl-L-methionine = epoxyqueuosine(34) in tRNA + adenine + L-methionine + 2 H(+). It participates in tRNA modification; tRNA-queuosine biosynthesis. Its function is as follows. Transfers and isomerizes the ribose moiety from AdoMet to the 7-aminomethyl group of 7-deazaguanine (preQ1-tRNA) to give epoxyqueuosine (oQ-tRNA). This Sodalis glossinidius (strain morsitans) protein is S-adenosylmethionine:tRNA ribosyltransferase-isomerase.